The following is a 599-amino-acid chain: UvrABC system protein C (599 aa).

Residues 18 to 96 (QLPGVYKMLG…IKQHRPPYNI (79 aa)) enclose the GIY-YIG domain. Residues 207–242 (KELNQELIAKMEQAAADLEFEKAVFYRDRLSLLREV) enclose the UVR domain.

Belongs to the UvrC family. In terms of assembly, interacts with UvrB in an incision complex.

It is found in the cytoplasm. In terms of biological role, the UvrABC repair system catalyzes the recognition and processing of DNA lesions. UvrC both incises the 5' and 3' sides of the lesion. The N-terminal half is responsible for the 3' incision and the C-terminal half is responsible for the 5' incision. This chain is UvrABC system protein C, found in Acinetobacter baumannii (strain SDF).